We begin with the raw amino-acid sequence, 574 residues long: Putative ABC transporter ATP-binding protein VV2_1533 (574 aa).

ABC transporter domains lie at 3 to 244 and 299 to 533; these read IEFS…GIRE and LDVR…ANLT. Residues 37 to 44 and 332 to 339 contribute to the ATP site; these read GPSGSGKS and GKNGSGKS.

Belongs to the ABC transporter superfamily.

It is found in the cell inner membrane. Functionally, probably part of an ABC transporter complex. Responsible for energy coupling to the transport system. This Vibrio vulnificus (strain CMCP6) protein is Putative ABC transporter ATP-binding protein VV2_1533.